The sequence spans 382 residues: DnaJ homolog dnj-20 (382 aa).

Residues 1-21 (MRILNVSLLVLTAFLVDFVEC) form the signal peptide. The J domain occupies 24–89 (DFYKILGVSK…EKRAMYDRHG (66 aa)).

The polypeptide is DnaJ homolog dnj-20 (Caenorhabditis briggsae).